Reading from the N-terminus, the 139-residue chain is MSKKIIYFLCTGNSCRSQMAEGWGKKILGEEWDVYSAGIEAHGLNPNAIKAMREVDIDITNQTSDQIDKDILNKADFVVTLCGDAKDKCPMTPPHVKRDHWGFEDPAKAQGTEEEKWTVFQQVRDKIGDRIKVFAKTGE.

Catalysis depends on nucleophile residues Cys-10, Cys-82, and Cys-89. Intrachain disulfides connect Cys-10/Cys-82 and Cys-82/Cys-89.

This sequence belongs to the low molecular weight phosphotyrosine protein phosphatase family. Thioredoxin-coupled ArsC subfamily.

The protein localises to the cytoplasm. The catalysed reaction is arsenate + [thioredoxin]-dithiol + H(+) = arsenite + [thioredoxin]-disulfide + H2O. In terms of biological role, catalyzes the reduction of arsenate [As(V)] to arsenite [As(III)]. This Oceanobacillus iheyensis (strain DSM 14371 / CIP 107618 / JCM 11309 / KCTC 3954 / HTE831) protein is Arsenate reductase.